The following is a 376-amino-acid chain: MYVRRLELVDFRSYERVGVDLEPGANVLVGHNGVGKTNLIEALGYVATLDSHRVATDAPLVRMGAGAAVIRCAVVHEGRELLIELEIVPGRANRARLGRSPARRARDVLGALRLVLFAPEDLELVRGDPAERRRYLDDLLVLRQPRYAGVRADYERVVRQRNALLRTAYLARKTGGTRGGDLSTLAVWDDHLARHGAELLAGRLDLVAALAPHVTRAYDAVAAGTGAAGIAYRPSVELPTPTTDRADLTAALSAALAAGRSAEIERGTTLVGPHRDDLTLTLGPLPAKGYASHGESWSLALALRLAGYDLLRVDGIEPVLVLDDVFAELDTGRRDRLAQLVGDASQLLVTCAVEEDVPARLRGARFVVRGGEVHRA.

30-37 (GHNGVGKT) is a binding site for ATP.

It belongs to the RecF family.

It localises to the cytoplasm. Functionally, the RecF protein is involved in DNA metabolism; it is required for DNA replication and normal SOS inducibility. RecF binds preferentially to single-stranded, linear DNA. It also seems to bind ATP. The protein is DNA replication and repair protein RecF of Salinispora arenicola (strain CNS-205).